The sequence spans 884 residues: uncharacterized protein (884 aa).

This is an uncharacterized protein from Mycobacterium bovis (strain ATCC BAA-935 / AF2122/97).